We begin with the raw amino-acid sequence, 274 residues long: Leucyl/phenylalanyl-tRNA--protein transferase (274 aa).

The protein belongs to the L/F-transferase family.

The protein localises to the cytoplasm. It carries out the reaction N-terminal L-lysyl-[protein] + L-leucyl-tRNA(Leu) = N-terminal L-leucyl-L-lysyl-[protein] + tRNA(Leu) + H(+). The catalysed reaction is N-terminal L-arginyl-[protein] + L-leucyl-tRNA(Leu) = N-terminal L-leucyl-L-arginyl-[protein] + tRNA(Leu) + H(+). It catalyses the reaction L-phenylalanyl-tRNA(Phe) + an N-terminal L-alpha-aminoacyl-[protein] = an N-terminal L-phenylalanyl-L-alpha-aminoacyl-[protein] + tRNA(Phe). Functionally, functions in the N-end rule pathway of protein degradation where it conjugates Leu, Phe and, less efficiently, Met from aminoacyl-tRNAs to the N-termini of proteins containing an N-terminal arginine or lysine. The protein is Leucyl/phenylalanyl-tRNA--protein transferase of Psychrobacter cryohalolentis (strain ATCC BAA-1226 / DSM 17306 / VKM B-2378 / K5).